The primary structure comprises 875 residues: Leucine--tRNA ligase (875 aa).

The segment covering 1-20 has biased composition (polar residues); it reads MPSAGSVNAANPAVDTSAQT. Positions 1 to 22 are disordered; the sequence is MPSAGSVNAANPAVDTSAQTGR. A 'HIGH' region motif is present at residues 60–70; that stretch reads PYPSGSLHMGH. A 'KMSKS' region motif is present at residues 634–638; it reads KMSKS. An ATP-binding site is contributed by K637.

It belongs to the class-I aminoacyl-tRNA synthetase family.

The protein localises to the cytoplasm. It catalyses the reaction tRNA(Leu) + L-leucine + ATP = L-leucyl-tRNA(Leu) + AMP + diphosphate. The chain is Leucine--tRNA ligase from Synechococcus sp. (strain CC9605).